A 383-amino-acid chain; its full sequence is Chaperone protein DnaJ (383 aa).

The J domain maps to 6 to 71; it reads DYYEVLGVSK…QKRSQYDQFG (66 aa). The CR-type zinc-finger motif lies at 141-223; that stretch reads GVEKKVKVKK…CKGEGVEIGE (83 aa). Zn(2+)-binding residues include cysteine 154, cysteine 157, cysteine 171, cysteine 174, cysteine 197, cysteine 200, cysteine 211, and cysteine 214. 4 CXXCXGXG motif repeats span residues 154 to 161, 171 to 178, 197 to 204, and 211 to 218; these read CSKCRGDG, CQTCHGTG, CPTCHGEG, and CSKCKGEG.

The protein belongs to the DnaJ family. In terms of assembly, homodimer. Zn(2+) serves as cofactor.

It is found in the cytoplasm. Its function is as follows. Participates actively in the response to hyperosmotic and heat shock by preventing the aggregation of stress-denatured proteins and by disaggregating proteins, also in an autonomous, DnaK-independent fashion. Unfolded proteins bind initially to DnaJ; upon interaction with the DnaJ-bound protein, DnaK hydrolyzes its bound ATP, resulting in the formation of a stable complex. GrpE releases ADP from DnaK; ATP binding to DnaK triggers the release of the substrate protein, thus completing the reaction cycle. Several rounds of ATP-dependent interactions between DnaJ, DnaK and GrpE are required for fully efficient folding. Also involved, together with DnaK and GrpE, in the DNA replication of plasmids through activation of initiation proteins. This Porphyromonas gingivalis (strain ATCC BAA-308 / W83) protein is Chaperone protein DnaJ.